The following is a 257-amino-acid chain: Protein TONNEAU 1b (257 aa).

Residues 73–105 form the LisH domain; the sequence is SGRLLSALICEYLDWAQLNHTLKVYQPECNSAK. 2 disordered regions span residues 148-216 and 231-257; these read QVMG…EDMP and LDRKTRNLTSSWRNVKDGTSEEEEGKD. The span at 187 to 199 shows a compositional bias: low complexity; that stretch reads SVSASQASGAATS. Composition is skewed to basic and acidic residues over residues 201–212 and 244–257; these read YRKDESNWRYDT and NVKDGTSEEEEGKD.

As to quaternary structure, interacts with CEN1, LNG1/TRM2 and LNG2/TRM1 (via C-terminus).

It is found in the cytoplasm. The protein resides in the cytoskeleton. Involved in the control of the dynamic organization of the cortical cytoskeleton. May play a role in the organization of microtubule arrays at the centrosome through interaction with centrin 1 (CEN1). The sequence is that of Protein TONNEAU 1b (TON1B) from Arabidopsis thaliana (Mouse-ear cress).